The primary structure comprises 569 residues: Peroxynitrite isomerase THAP4 (569 aa).

The segment at Met-1 to Phe-85 adopts a THAP-type zinc-finger fold. The segment at Ser-88 to Phe-216 is disordered. Composition is skewed to polar residues over residues Ile-121 to Asn-130 and Ala-157 to Glu-167. Residue Ser-159 is modified to Phosphoserine. An HCFC1-binding motif (HBM) motif is present at residues Leu-230–Tyr-233. Residue Ser-234 is modified to Phosphoserine. The tract at residues Phe-235–Ala-312 is disordered. A compositionally biased stretch (basic and acidic residues) spans Glu-242 to Pro-262. Over residues Ser-265–Thr-279 the composition is skewed to polar residues. Over residues Ala-280–Pro-289 the composition is skewed to low complexity. Residues Pro-407–Pro-569 are nitrobindin. Thr-436 and His-559 together coordinate heme b.

The protein in the C-terminal section; belongs to the nitrobindin family. As to quaternary structure, homodimer. The cofactor is heme b.

Its subcellular location is the cytoplasm. It is found in the nucleus. The enzyme catalyses peroxynitrite = nitrate. It participates in nitrogen metabolism. In terms of biological role, heme-binding protein able to scavenge peroxynitrite and to protect free L-tyrosine against peroxynitrite-mediated nitration, by acting as a peroxynitrite isomerase that converts peroxynitrite to nitrate. Therefore, this protein likely plays a role in peroxynitrite sensing and in the detoxification of reactive nitrogen and oxygen species (RNS and ROS, respectively). Is able to bind nitric oxide (NO) in vitro, but may act as a sensor of peroxynitrite levels in vivo, possibly modulating the transcriptional activity residing in the N-terminal region. This Mus musculus (Mouse) protein is Peroxynitrite isomerase THAP4.